We begin with the raw amino-acid sequence, 751 residues long: Dachshund homolog 1 (751 aa).

Residues Met-1–Asn-178 are disordered. Low complexity-rich tracts occupy residues Ile-20–Thr-53 and Ala-61–Ser-74. Composition is skewed to gly residues over residues Pro-75–Ser-97 and Ser-107–Ala-119. Low complexity predominate over residues Ser-120–Ser-156. Residues Ser-167 to Asn-178 are compositionally biased toward polar residues. Positions Lys-182–Leu-268 are DACHbox-N. Residues Lys-182–Lys-377 form an interaction with SIX6 and HDAC3 region. 4 disordered regions span residues Thr-273–Ser-295, Ser-351–Ala-393, Ser-467–Val-525, and Met-537–Asp-556. Polar residues-rich tracts occupy residues Arg-285 to Asn-294 and Ser-351 to Gly-369. Ser-484 bears the Phosphoserine mark. The span at Ser-499–Glu-517 shows a compositional bias: low complexity. The DACHbox-C stretch occupies residues Ser-609–Leu-689. The segment at Gly-620 to Ala-699 is interaction with SIN3A. The stretch at Lys-623 to Ser-711 forms a coiled coil.

The protein belongs to the DACH/dachshund family. Interacts with SIX1, SIX6 and EYA3. Interacts with NCOR1 and HDAC3 through its N-terminus. Interacts with SIN3A through its C-terminus. Interacts with SMAD3 and SMAD4. In terms of tissue distribution, expressed at higher levels in adult kidney and lung, and at lower levels in brain and testis. Expressed in embryonal kidneys, eyes, cochleae and limb buds.

The protein localises to the nucleus. Functionally, transcription factor that is involved in regulation of organogenesis. Seems to be a regulator of SIX1, SIX6 and probably SIX5. Corepression of precursor cell proliferation in myoblasts by SIX1 is switched to coactivation through recruitment of EYA3 to the SIX1-DACH1 complex. Transcriptional activation also seems to involve association of CREBBP. Seems to act as a corepressor of SIX6 in regulating proliferation by directly repressing cyclin-dependent kinase inhibitors, including the p27Kip1 promoter. Inhibits TGF-beta signaling through interaction with SMAD4 and NCOR1. Binds to chromatin DNA via its DACHbox-N domain. This chain is Dachshund homolog 1 (Dach1), found in Mus musculus (Mouse).